The sequence spans 174 residues: UPF0316 protein lwe1794 (174 aa).

3 consecutive transmembrane segments (helical) span residues 4–24 (GLFI…IYTV), 36–56 (LAAL…SLVL), and 62–82 (IANV…GMKI).

Belongs to the UPF0316 family.

Its subcellular location is the cell membrane. This Listeria welshimeri serovar 6b (strain ATCC 35897 / DSM 20650 / CCUG 15529 / CIP 8149 / NCTC 11857 / SLCC 5334 / V8) protein is UPF0316 protein lwe1794.